The sequence spans 701 residues: Peptide transporter 3 (701 aa).

Helical transmembrane passes span 29–49 (FSFY…HEFS), 55–75 (FIYH…SIMA), 91–111 (IYVV…SYPI), 119–139 (GLFV…AFAA), 154–174 (FSFF…ITPI), 188–208 (FPLA…LFLM), 269–289 (GLLN…LFDQ), 318–338 (INPV…YPAL), and 351–371 (AVGG…QLKV). Asparagine 391 and asparagine 432 each carry an N-linked (GlcNAc...) asparagine glycan. A run of 3 helical transmembrane segments spans residues 575-595 (ILWS…LSVT), 611-631 (VLTA…MMIS), and 641-661 (LEFF…ILLA).

This sequence belongs to the major facilitator superfamily. Proton-dependent oligopeptide transporter (POT/PTR) (TC 2.A.17) family. As to expression, expressed in the AVA interneuron.

Its subcellular location is the membrane. Its function is as follows. Neuron-specific, H(+)-coupled oligopeptide transporter with broad specificity towards di- and tripeptides in a Na(+) and Cl(-)-independent manner. Shows H(+) channel activity in the absence of peptide substrates. This is Peptide transporter 3 (pept-3) from Caenorhabditis elegans.